We begin with the raw amino-acid sequence, 593 residues long: Proline dehydrogenase 1, mitochondrial (593 aa).

Positions 24-44 are disordered; it reads PAAREQPAAGPGAEPVCGPAE. Residues Lys-368 and Lys-479 each carry the N6-acetyllysine modification.

The protein belongs to the proline oxidase family. It depends on FAD as a cofactor.

It localises to the mitochondrion matrix. It carries out the reaction L-proline + a quinone = (S)-1-pyrroline-5-carboxylate + a quinol + H(+). Its pathway is amino-acid degradation; L-proline degradation into L-glutamate; L-glutamate from L-proline: step 1/2. Converts proline to delta-1-pyrroline-5-carboxylate. This Bos taurus (Bovine) protein is Proline dehydrogenase 1, mitochondrial.